Here is a 1026-residue protein sequence, read N- to C-terminus: MQSLRFRQIDPGMTLREIDSEILKYWKDKNILEKILSKGGSKKFVFLEGPPTANGRPHIGHAMTRTIKDIVLRYNTMTDHKIYRRVGGWDCHGLPVELEAEKHFGFHTKSEIVNFGVEKFNQYCRESIFRYIDEWKQVDDLIGFSIDHNGDYITLRNDYMESEWFALKTMYNSGLLYKDYTVVPYCPRCETSLSSHEVAQGYKDVKDPSVYVRFKSADEENTYFVAWTTTPWTLPSNEFLVVNPDMEYSLVEAQGSRYYVASSRAGYIFKEYREIRRMHGRDLVGKRYLQLMPFLDPPSGSLKVVAGSFVTSEDGSGIVHAAPAFGADDYQIGKEEGVEILNPVDKNGRFADPRIPWNGKFVRDANEDIIVYLKKNQMLLKSEKYEHSYPFCYRCDTPLLYYPLDAWFIAVSRIRDKLVEYNERINWKPDYLKHGRFGNFLGEAKDWNLSRDRFWGTPLPAWRCKNGHLVFVGSRKEIEDLGGKVPEDLHRPYIDEVRFKCPTCGEEMSREPYVIDTWFDSGSATYAASHYPFEKNFDPETDVPVSFITEAIDQTRGWFYVLHVIATIMFNKNAYESALSINFILDAQGRKMSKSKGNSVYALDFLNEVPPDSLRLFFLYGAPWKSKNLDKKVIDEVSRKTLMTVLNVYSFFAYNANIDNFQWNGLQLSGNALDRYMVSKVNSFVRSSRDAYESLDFHEVVRASMEFVDDLSNFYLRLSRRRFWAEGFDDDKLSAYSTLYYALKAFSEVMAPITPFFSDFIYLNLGGDKESVHLEAFPEFDSTLMDEKLESEMDRAYSVIETVRRLRQENSIKGRQPLREILIAGDMEESIIDVVKSELNAKDIKLIERDQEPIRLSADLRMDRAAPVLRSRVNAVRHKIRSMDGLEVQRQISEKGFVEIDGVRLDPDMVEISRVPDPNYAYSQTEKYGIDVFINKNIDRDGYLEGLARELVRRIQVMRKEMNLNYTDRIITHLDLSDDFLEALNKHAEYIKNETQSDSIITDKVEGMKLWEINGEPVRIKIDLAR.

The 'HIGH' region motif lies at 51-61 (PTANGRPHIGH). The 'KMSKS' region motif lies at 591–595 (KMSKS). Residue Lys594 coordinates ATP.

Belongs to the class-I aminoacyl-tRNA synthetase family. IleS type 2 subfamily. As to quaternary structure, monomer. Requires Zn(2+) as cofactor.

It is found in the cytoplasm. It carries out the reaction tRNA(Ile) + L-isoleucine + ATP = L-isoleucyl-tRNA(Ile) + AMP + diphosphate. Its function is as follows. Catalyzes the attachment of isoleucine to tRNA(Ile). As IleRS can inadvertently accommodate and process structurally similar amino acids such as valine, to avoid such errors it has two additional distinct tRNA(Ile)-dependent editing activities. One activity is designated as 'pretransfer' editing and involves the hydrolysis of activated Val-AMP. The other activity is designated 'posttransfer' editing and involves deacylation of mischarged Val-tRNA(Ile). The protein is Isoleucine--tRNA ligase of Thermoplasma acidophilum (strain ATCC 25905 / DSM 1728 / JCM 9062 / NBRC 15155 / AMRC-C165).